The following is a 407-amino-acid chain: Phosphopentomutase (407 aa).

Mn(2+) is bound by residues aspartate 10, aspartate 306, histidine 311, aspartate 347, histidine 348, and histidine 359.

Belongs to the phosphopentomutase family. Mn(2+) is required as a cofactor.

The protein resides in the cytoplasm. The catalysed reaction is 2-deoxy-alpha-D-ribose 1-phosphate = 2-deoxy-D-ribose 5-phosphate. It catalyses the reaction alpha-D-ribose 1-phosphate = D-ribose 5-phosphate. The protein operates within carbohydrate degradation; 2-deoxy-D-ribose 1-phosphate degradation; D-glyceraldehyde 3-phosphate and acetaldehyde from 2-deoxy-alpha-D-ribose 1-phosphate: step 1/2. Isomerase that catalyzes the conversion of deoxy-ribose 1-phosphate (dRib-1-P) and ribose 1-phosphate (Rib-1-P) to deoxy-ribose 5-phosphate (dRib-5-P) and ribose 5-phosphate (Rib-5-P), respectively. The protein is Phosphopentomutase of Buchnera aphidicola subsp. Acyrthosiphon pisum (strain APS) (Acyrthosiphon pisum symbiotic bacterium).